A 218-amino-acid polypeptide reads, in one-letter code: Thiopurine S-methyltransferase (218 aa).

Residues tryptophan 10, leucine 45, glutamate 66, and arginine 123 each contribute to the S-adenosyl-L-methionine site.

Belongs to the class I-like SAM-binding methyltransferase superfamily. TPMT family.

It is found in the cytoplasm. The catalysed reaction is S-adenosyl-L-methionine + a thiopurine = S-adenosyl-L-homocysteine + a thiopurine S-methylether.. This chain is Thiopurine S-methyltransferase, found in Shewanella denitrificans (strain OS217 / ATCC BAA-1090 / DSM 15013).